The chain runs to 409 residues: Multifunctional CCA protein (409 aa).

Gly-8 and Arg-11 together coordinate ATP. Positions 8 and 11 each coordinate CTP. Mg(2+) is bound by residues Asp-21 and Asp-23. ATP-binding residues include Arg-91, Arg-137, and Arg-140. The CTP site is built by Arg-91, Arg-137, and Arg-140. The region spanning 228–329 is the HD domain; sequence TGVHTLSVLE…LELLQSFDVY (102 aa).

It belongs to the tRNA nucleotidyltransferase/poly(A) polymerase family. Bacterial CCA-adding enzyme type 1 subfamily. Monomer. Can also form homodimers and oligomers. Mg(2+) serves as cofactor. The cofactor is Ni(2+).

It carries out the reaction a tRNA precursor + 2 CTP + ATP = a tRNA with a 3' CCA end + 3 diphosphate. It catalyses the reaction a tRNA with a 3' CCA end + 2 CTP + ATP = a tRNA with a 3' CCACCA end + 3 diphosphate. Catalyzes the addition and repair of the essential 3'-terminal CCA sequence in tRNAs without using a nucleic acid template. Adds these three nucleotides in the order of C, C, and A to the tRNA nucleotide-73, using CTP and ATP as substrates and producing inorganic pyrophosphate. tRNA 3'-terminal CCA addition is required both for tRNA processing and repair. Also involved in tRNA surveillance by mediating tandem CCA addition to generate a CCACCA at the 3' terminus of unstable tRNAs. While stable tRNAs receive only 3'-terminal CCA, unstable tRNAs are marked with CCACCA and rapidly degraded. In Pseudomonas fluorescens (strain SBW25), this protein is Multifunctional CCA protein.